The chain runs to 838 residues: MSSAVLVTLLPDPSSSFREDAPRPPVPGEEGETPPCQPSVGKVQSTKPMPVSSNARRNEDGLGEPEGRASPDSPLTRWTKSLHSLLGDQDGAYLFRTFLEREKCVDTLDFWFACNGFRQMNLKDTKTLRVAKAIYKRYIENNSVVSKQLKPATKTYIRDGIKKQQIGSVMFDQAQTEIQAVMEENAYQVFLTSDIYLEYVRSGGENTAYMSNGGLGSLKVLCGYLPTLNEEEEWTCADLKCKLSPTVVGLSSKTLRATASVRSTETAENGFRSFKRSEPVNPYHVGSGYVFAPATSANDSELSSDALTDDSMSMTDSSVDGIPPYRMGSKKQLQREMHRSVKANGQVSLPHFPRTHRLPKEMTPVEPAAFAAELISRLEKLKLELESRHSLEERLQQIREDEEKEGSEQALSSRDGAPVQHPLALLPSGSYEEDPQTILDDHLSRVLKTPGCQSPGVGRYSPRSRSPDHHHHHHQQCHALLPTGGKLPPEAACPLLGGKSFLTKQTTKHVHHHYIHHHAVPKTKEEIEAEATQRVRCLCPGGTDYYCYSKCKSHSKPPEPLPGEQFCGSRGGTLPKRNTKGTEPGLALPAREGGMSSAAGAPQLPGEEGDRSQDVWQWMLESERQSKSKPHSTQSIRKSYPLESARAPPGERVSRHHLLGASGHPRSAARAHPFTQDPAMPPLTPPNTLAQLEEACRRLAEVSKPQKQRCCVASQQRDRNHPATGQAGPTSFSNPSLASEDHKEPKRLASVHALQASELIVTYFFCGEEIPYRRMLKAQSLTLGHFKEQLSKKGNYRYYFKKASDEFACGAVFEEIWDDETVLPMYEGRILGKVERID.

A disordered region spans residues 1 to 75 (MSSAVLVTLL…EGRASPDSPL (75 aa)). Positions 21 to 30 (APRPPVPGEE) match the Tankyrase-binding motif motif. Residues 42-55 (KVQSTKPMPVSSNA) are compositionally biased toward polar residues. Residues 56–69 (RRNEDGLGEPEGRA) show a composition bias toward basic and acidic residues. Residues 81–200 (SLHSLLGDQD…LTSDIYLEYV (120 aa)) enclose the RGS domain. 5 disordered regions span residues 300 to 333 (SELS…KKQL), 398 to 435 (IRED…EEDP), 450 to 483 (PGCQ…LLPT), 568 to 682 (GSRG…AMPP), and 712 to 744 (VASQ…DHKE). The segment covering 303–318 (SSDALTDDSMSMTDSS) has biased composition (low complexity). Residues 327–413 (MGSKKQLQRE…KEGSEQALSS (87 aa)) are interaction with GSK3B. The segment at 413–476 (SRDGAPVQHP…PDHHHHHHQQ (64 aa)) is interaction with beta-catenin. Residues 727-737 (AGPTSFSNPSL) show a composition bias toward polar residues. In terms of domain architecture, DIX spans 756-838 (ASELIVTYFF…RILGKVERID (83 aa)).

In terms of assembly, interacts with SMAD7 and RNF111. Interacts with ANKRD6. Interacts with glycogen synthase kinase-3 beta (GSK3B) and beta-catenin. The interaction between axin and beta-catenin occurs via the armadillo repeats contained in beta-catenin. Interacts with SIAH1. Interacts with SIAH2. ADP-ribosylated by tankyrase TNKS and TNKS2. Poly-ADP-ribosylated protein is recognized by RNF146, followed by ubiquitination and subsequent activation of the Wnt signaling pathway. In terms of processing, ubiquitinated by RNF146 when poly-ADP-ribosylated, leading to its degradation and subsequent activation of the Wnt signaling pathway. Deubiquitinated by USP34, deubiquitinated downstream of beta-catenin stabilization step: deubiquitination is important Wnt signaling to positively regulate beta-catenin (CTNBB1)-mediated transcription. Post-translationally, probably phosphorylated by GSK3B and dephosphorylated by PP2A. As to expression, expressed in lung and thymus.

It is found in the cytoplasm. In terms of biological role, inhibitor of the Wnt signaling pathway. Down-regulates beta-catenin. Probably facilitate the phosphorylation of beta-catenin and APC by GSK3B. The polypeptide is Axin-2 (Axin2) (Rattus norvegicus (Rat)).